The chain runs to 504 residues: Maturase K (504 aa).

This sequence belongs to the intron maturase 2 family. MatK subfamily.

It localises to the plastid. It is found in the chloroplast. Usually encoded in the trnK tRNA gene intron. Probably assists in splicing its own and other chloroplast group II introns. This Cynophalla hastata (Broadleaf caper) protein is Maturase K.